A 101-amino-acid polypeptide reads, in one-letter code: Ubiquitin-related modifier 1 (101 aa).

Glycine 101 is subject to 1-thioglycine. Glycine 101 is covalently cross-linked (Glycyl lysine isopeptide (Gly-Lys) (interchain with K-? in acceptor proteins)).

Belongs to the URM1 family. Post-translationally, C-terminal thiocarboxylation occurs in 2 steps, it is first acyl-adenylated (-COAMP) via the hesA/moeB/thiF part of UBA4, then thiocarboxylated (-COSH) via the rhodanese domain of UBA4.

It is found in the cytoplasm. It participates in tRNA modification; 5-methoxycarbonylmethyl-2-thiouridine-tRNA biosynthesis. In terms of biological role, acts as a sulfur carrier required for 2-thiolation of mcm(5)S(2)U at tRNA wobble positions of cytosolic tRNA(Lys), tRNA(Glu) and tRNA(Gln). Serves as sulfur donor in tRNA 2-thiolation reaction by being thiocarboxylated (-COSH) at its C-terminus by the MOCS3 homolog UBA4. The sulfur is then transferred to tRNA to form 2-thiolation of mcm(5)S(2)U. Prior mcm(5) tRNA modification by the elongator complex is required for 2-thiolation. Also acts as a ubiquitin-like protein (UBL) that is covalently conjugated via an isopeptide bond to lysine residues of target proteins such as AHP1. The thiocarboxylated form serves as substrate for conjugation and oxidative stress specifically induces the formation of UBL-protein conjugates. The protein is Ubiquitin-related modifier 1 of Candida albicans (strain SC5314 / ATCC MYA-2876) (Yeast).